The primary structure comprises 491 residues: MANTKDSYHIITMDTKESSIPSLPMKEIPGDYGVPFFGAIKDRYDFHYNQGADEFFRSRMKKYDSTVFRTNVPPGPFNARNSKVVVLVDAVSYPILFDNSQVDKENYFEGTFMSSPSFNGGYKVCGFLGTSDPKHTTLKGLFLSTLTRLHDKFIPIFTTSITSMFTSLEKELSEKGTSYFNPIGDNLSFEFLFRLFCEGKNPIDTSVGPNGPKIVDKWVFLQLAPLISLGLKFVPNFLEDLVLHTFPLPYILVKRDHQKLYNAFYNSMKDILDEAEKLGVKRDEACHNFVFLAGFNSYGGLKVFFPSLIKWIGTSGPSLHARLVKEIRTAVKEAGGVTLSAIDKMPLVKSVVYETLRMDPPVPFQTVKARKNIIITNHESSFLIKKDELIFGYQPLATKDSKVFKNAEEFNPDRFVGGGEKLLKYVYWSNGKEIDNPSVNDKQCPGKDLIVLMGRLLVVEFFMRYDTFEVEFGKLLLGSKVTFKSLTKATS.

Heme b contacts are provided by Lys-104, His-135, and Lys-139. 2 residues coordinate (13S)-hydroperoxy-(9Z,11E)-octadecadienoate: Asn-296 and Lys-302. Asn-296 provides a ligand contact to (13S)-hydroperoxy-(9Z,11E,15Z)-octadecatrienoate. The heme b site is built by Lys-442 and Cys-444.

The protein belongs to the cytochrome P450 family. The cofactor is heme b. As to expression, expressed in roots. Not detected in aerial tissues, including cotyledons, leaves, stems and flower buds.

It catalyses the reaction (13S)-hydroperoxy-(9Z,11E,15Z)-octadecatrienoate = (9Z,13S,15Z)-12,13-epoxyoctadeca-9,11,15-trienoate + H2O. The enzyme catalyses (13S)-hydroperoxy-(9Z,11E)-octadecadienoate = (9Z,13S)-12,13-epoxyoctadeca-9,11-dienoate + H2O. It carries out the reaction (9Z,13S,15Z)-12,13-epoxyoctadeca-9,11,15-trienoate = (9S,13S,15Z)-12-oxophyto-10,15-dienoate. Cytochrome P450 metabolizing both 13- and 9-hydroperoxides of linoleic and linolenic acids, but with a marked preference for 9-hydroperoxy fatty acids. Catalyzes not only the synthesis of allene oxide, but also its hydrolysis and cyclization. The first step is the synthesis of (12Z)-9,10-epoxyoctadeca-10,12-dienoic acid (9,10-EOD) and the final products are (9R)-alpha-ketol and the racemic cis-10-oxo-11-phytoenoic acid. The cyclase activity possesses regiospecificity and (9Z)-12,13-epoxyoctadeca-9,11-dienoic acid (12,13-EOD) is significantly less efficient as a substrate for cyclopentenone production than 9,10-EOD. Has no hydroperoxide lyase activity. May play a defensive role against soil-borne pests that affect roots or juvenile tissues as they emerge from the germinating seed. This Solanum lycopersicum (Tomato) protein is Allene oxide synthase 3.